A 93-amino-acid chain; its full sequence is Cobalt transport protein CbiN (93 aa).

Transmembrane regions (helical) follow at residues 5–25 (LMLLAMVVALVILPFFINHGG) and 63–83 (LLFTLQGSLGAAVIFYILGYC).

It belongs to the CbiN family. Forms an energy-coupling factor (ECF) transporter complex composed of an ATP-binding protein (A component, CbiO), a transmembrane protein (T component, CbiQ) and 2 possible substrate-capture proteins (S components, CbiM and CbiN) of unknown stoichimetry.

It localises to the cell inner membrane. It participates in cofactor biosynthesis; adenosylcobalamin biosynthesis. Its function is as follows. Part of the energy-coupling factor (ECF) transporter complex CbiMNOQ involved in cobalt import. This Salmonella arizonae (strain ATCC BAA-731 / CDC346-86 / RSK2980) protein is Cobalt transport protein CbiN.